We begin with the raw amino-acid sequence, 325 residues long: Tetraacyldisaccharide 4'-kinase (325 aa).

Position 58–65 (58–65) interacts with ATP; it reads TVGGSGKT.

The protein belongs to the LpxK family.

It catalyses the reaction a lipid A disaccharide + ATP = a lipid IVA + ADP + H(+). It functions in the pathway glycolipid biosynthesis; lipid IV(A) biosynthesis; lipid IV(A) from (3R)-3-hydroxytetradecanoyl-[acyl-carrier-protein] and UDP-N-acetyl-alpha-D-glucosamine: step 6/6. Functionally, transfers the gamma-phosphate of ATP to the 4'-position of a tetraacyldisaccharide 1-phosphate intermediate (termed DS-1-P) to form tetraacyldisaccharide 1,4'-bis-phosphate (lipid IVA). The protein is Tetraacyldisaccharide 4'-kinase of Coxiella burnetii (strain CbuG_Q212) (Coxiella burnetii (strain Q212)).